The sequence spans 93 residues: Large ribosomal subunit protein uL23cz/uL23cy (93 aa).

It belongs to the universal ribosomal protein uL23 family. Part of the 50S ribosomal subunit.

The protein resides in the plastid. It is found in the chloroplast. In terms of biological role, binds to 23S rRNA. This chain is Large ribosomal subunit protein uL23cz/uL23cy (rpl23-A), found in Nymphaea alba (White water-lily).